The sequence spans 131 residues: Large ribosomal subunit protein bL17 (131 aa).

This sequence belongs to the bacterial ribosomal protein bL17 family. In terms of assembly, part of the 50S ribosomal subunit. Contacts protein L32.

The sequence is that of Large ribosomal subunit protein bL17 from Shewanella violacea (strain JCM 10179 / CIP 106290 / LMG 19151 / DSS12).